Reading from the N-terminus, the 39-residue chain is Potassium channel toxin alpha-KTx 2.23 (39 aa).

3 cysteine pairs are disulfide-bonded: Cys-7–Cys-29, Cys-13–Cys-34, and Cys-17–Cys-36.

In terms of tissue distribution, expressed by the venom gland.

It localises to the secreted. Blocks human voltage-gated potassium (Kv) channels Kv1.1/KCNA1, Kv1.2/KCNA2 and Kv1.3/KCNA3. The polypeptide is Potassium channel toxin alpha-KTx 2.23 (Centruroides bonito (Scorpion)).